A 296-amino-acid polypeptide reads, in one-letter code: MSMPKIVLFYVFTPLADPEAIRLWQKALAEKWNLKGRVIISKDGINATLGGELNDVKRYCRETRSYAPFKNADIKWSEGEGDDFPRLSVKVRPELVTFGAGDELKVNEEGVIGGGTHLKPEDLHHLMDERGDDVVFFDGRNAMEAEIGKFRNAVVPNTTTTRDFLNEIESGKYDDLKKRPVVTYCTGGIRCEVLSVLMKNRGFEEVYQLDGGIVRYGEAYGNDGYWDGSLYVFDKRMHMEFGSGTESLGHCVECGKPTAQFVNCANNDCRKLFLRCDECTAAHKHQYCGECEPALV.

A Rhodanese domain is found at R130 to Y225. The Cysteine persulfide intermediate role is filled by C185.

Belongs to the TrhO family.

The enzyme catalyses uridine(34) in tRNA + AH2 + O2 = 5-hydroxyuridine(34) in tRNA + A + H2O. Catalyzes oxygen-dependent 5-hydroxyuridine (ho5U) modification at position 34 in tRNAs. The protein is tRNA uridine(34) hydroxylase of Corynebacterium kroppenstedtii (strain DSM 44385 / JCM 11950 / CIP 105744 / CCUG 35717).